The sequence spans 5900 residues: Midasin (5900 aa).

Positions 250 to 270 (GSSVKSKKGGEQQQEGEGEDE) are disordered. 6 AAA-ATPase protomer regions span residues 278-583 (TNTV…LRKQ), 673-1012 (EKIS…ALNY), 1101-1346 (PIIP…IAGY), 1411-1721 (IVWT…MDKQ), 1840-2089 (RGMQ…HVLT), and 2167-2451 (LENI…EIYM). Residues 302–309 (GVTGSGKT) and 689–696 (GETGTGKT) contribute to the ATP site. The interval 796-826 (QTTTNNTKENNNNNNNNNNNNNNNNNNKKRT) is disordered. Positions 797–821 (TTTNNTKENNNNNNNNNNNNNNNNN) are enriched in low complexity. Residues 1135–1142 (GPTSSGKT), 1438–1445 (GETGCSKT), 1852–1859 (GSPGVGKT), and 2184–2191 (GPTSTSKT) contribute to the ATP site. Residues 2562–4965 (ESAIKSILCE…EGKGKKDVSD (2404 aa)) are linker. The disordered stretch occupies residues 4932-5598 (GDDGEGGEGG…SVEEKKLTRE (667 aa)). The span at 4984–5008 (KDEDEDEEKEEKDEDEGFDMQDDFE) shows a compositional bias: acidic residues. Residues 5009–5055 (GEMHDIKKDENKDEDKKDDPNNEKENDKEMGDLEKPEDNVVDEKLWD) are compositionally biased toward basic and acidic residues. A compositionally biased stretch (acidic residues) spans 5056 to 5076 (EQDVQDEEEQDEEGKGDETNS). The span at 5079–5113 (MMAKQDGKDDNDDDKKDDDKKDDKKKKKEENGKPD) shows a compositional bias: basic and acidic residues. 2 stretches are compositionally biased toward acidic residues: residues 5114 to 5130 (ENEEGEEGKDDEEEDGK) and 5139 to 5156 (GASDEDDFGQEENEDDVI). Residues 5159–5173 (EQEKEENHGDPRGDD) are compositionally biased toward basic and acidic residues. The span at 5174–5199 (QMEIPEDLELEDPDEGKEDDEQQDGG) shows a compositional bias: acidic residues. Basic and acidic residues predominate over residues 5213 to 5224 (DVSKEEEKKKEL). Acidic residues-rich tracts occupy residues 5225–5255 (DGDEKEESDQDGDEEKEDEEKEDGDEDEDKE) and 5273–5286 (EGDEPEKEQPEEDQ). Residues 5297–5313 (ETPKDSEQPLGVKDKTG) show a composition bias toward basic and acidic residues. Over residues 5339 to 5349 (GMTQPTPSEND) the composition is skewed to polar residues. Residues 5410-5442 (SEPKEKAPKQDPNAKENENQDYEFIKDDEKLDK) are compositionally biased toward basic and acidic residues. The segment covering 5448-5460 (QALAAATDTQLQD) has biased composition (low complexity). Positions 5469 to 5487 (DQAEQEEDQMDIDEEDDMD) are enriched in acidic residues. Composition is skewed to basic and acidic residues over residues 5488 to 5536 (VDHK…KDQQ) and 5551 to 5570 (QFTKEQLENLTNLDKEKAVL). The segment covering 5571 to 5590 (DDGDDQEMEQDGDQDDEESV) has biased composition (acidic residues). The VWFA domain maps to 5696–5889 (QVLLAIDDTE…NIPSILSDTL (194 aa)).

It belongs to the midasin family. Associates with pre-60S ribosomes in the nucleoplasm.

It is found in the nucleus. It localises to the nucleolus. The protein localises to the nucleoplasm. In terms of biological role, nuclear chaperone required for maturation and nuclear export of pre-60S ribosome subunits. Functions at successive maturation steps to remove ribosomal factors at critical transition points, first driving the exit of early pre-60S particles from the nucleolus and then driving late pre-60S particles from the nucleus. In Dictyostelium discoideum (Social amoeba), this protein is Midasin (mdn1).